A 78-amino-acid chain; its full sequence is UPF0349 protein Sca_0544 (78 aa).

This sequence belongs to the UPF0349 family.

The protein is UPF0349 protein Sca_0544 of Staphylococcus carnosus (strain TM300).